The following is a 183-amino-acid chain: Protein jagunal homolog 1-B (183 aa).

The Cytoplasmic portion of the chain corresponds to 1–39; that stretch reads MASRAGPRATGTDGSDYQHRERVASHYQMSVALKSEIKK. Residues 40 to 60 traverse the membrane as a helical segment; sequence LNIAHAVVWFLVAAQVLVSQL. Over 61–71 the chain is Lumenal; sequence NLVSHKVVASP. Residues 72–92 traverse the membrane as a helical segment; that stretch reads YQWEYTYLLSIIPTVFSFMAL. At 93–99 the chain is on the cytoplasmic side; sequence PKNNISY. The chain crosses the membrane as a helical span at residues 100–120; the sequence is LVISMISGGLFCIGPILYGGM. Residues 121 to 137 lie on the Lumenal side of the membrane; that stretch reads EMFPVAQQLYRHGKAYR. The chain crosses the membrane as a helical span at residues 138 to 158; it reads FIFGFSAVSIMYLVLIISVQV. Topologically, residues 159 to 183 are cytoplasmic; the sequence is HGWQIYYSKKLLDAWFTNTQDKKKK.

Belongs to the jagunal family.

The protein resides in the endoplasmic reticulum membrane. Endoplasmic reticulum transmembrane protein involved in vesicle-mediated transport, which is required for neutrophil function. This chain is Protein jagunal homolog 1-B (jagn1b), found in Danio rerio (Zebrafish).